The following is a 604-amino-acid chain: Dopamine receptor 3 (604 aa).

Over 1-23 (MLTGQHHIPGIESPLMVVLWRVA) the chain is Extracellular. Residues 24–44 (AGVFLPLVPTMAVFGNVLVIL) form a helical membrane-spanning segment. Over 45–58 (SVYRERNLQTVTNM) the chain is Cytoplasmic. Residues 59 to 79 (LIVSLAVSDLFVAIGVMSFGV) form a helical membrane-spanning segment. Topologically, residues 80–96 (YYEWNGFKWGLGSFFCH) are extracellular. Residues Cys95 and Cys170 are joined by a disulfide bond. Residues 97-117 (VYQALDVACSTASILNLLAIS) traverse the membrane as a helical segment. Residues 118-141 (LDRYIAIGHPISYAQYGARGGRAM) are Cytoplasmic-facing. A helical membrane pass occupies residues 142-162 (ISITIVWGVSCAVALPLLLGV). The Extracellular segment spans residues 163–179 (NPMENDQCELANPWFNM). The helical transmembrane segment at 180-200 (ISSIFSFFIPCIAMIILYTII) threads the bilayer. The Cytoplasmic portion of the chain corresponds to 201-520 (FRRLRQRERA…TKQMRREHKA (320 aa)). Residues 399 to 430 (SIQDEKKMNSRPPENPFAHQNGTNKQRLLPNP) are disordered. Residues 521-541 (TVTLAVVLAVFLFCWLPFFIL) traverse the membrane as a helical segment. Residues 542 to 559 (HLSNSICLVIDSNSDCIG) lie on the Extracellular side of the membrane. Residues 560-580 (FLPLYLATWLGYLNSSLNPLI) form a helical membrane-spanning segment. The Cytoplasmic portion of the chain corresponds to 581–604 (YTVFDQRFRNAFRNILSCGFFKKR).

It belongs to the G-protein coupled receptor 1 family.

It localises to the cell membrane. Functionally, receptor for dopamine. The activity of this receptor is mediated by G proteins which activate adenylyl cyclase. In terms of antagonist responses, would be classed with the D2-like dopamine receptor group. Mediates the effect of dopamine on the inhibition of locomotion. Acts as an antagonist of dop-1. In Caenorhabditis briggsae, this protein is Dopamine receptor 3.